A 340-amino-acid chain; its full sequence is MVFIDACFRKKTPYTPIWMMRQAGRYLPEYMEVRNKAGDFLTLCKNPKMAAEVTLQPVEILDVDAAILFSDILVIPLEMGMDLRFEKGEGPVFSKPVRTWEDLGSLYEFPEEKLTYVYETIKIVRKKLPKDKALIGFSGAPWTLATYMVEGSGSKTYAAIKKLIYTDPEFMHALMIKITEAVKAYLVKQIESGVNAVQIFDSWASALEKEKFFEFSWDYMVDIAEFLKERYPEIPVILFPKGIAGYLDDIYGKFDVFGVDWGTPIDLAKEKLGNKYVLQGNMEPTRLYSKEATKEGVEKIVEVMGAKEGHIFNLGHGMLPDLPVENAKYLVELVHDLTRR.

Residues 21 to 25 (RQAGR), Asp-71, Tyr-147, Ser-202, and His-316 each bind substrate.

The protein belongs to the uroporphyrinogen decarboxylase family. Homodimer.

The protein localises to the cytoplasm. It carries out the reaction uroporphyrinogen III + 4 H(+) = coproporphyrinogen III + 4 CO2. It participates in porphyrin-containing compound metabolism; protoporphyrin-IX biosynthesis; coproporphyrinogen-III from 5-aminolevulinate: step 4/4. Functionally, catalyzes the decarboxylation of four acetate groups of uroporphyrinogen-III to yield coproporphyrinogen-III. The chain is Uroporphyrinogen decarboxylase from Nitratiruptor sp. (strain SB155-2).